The chain runs to 255 residues: Cytochrome c oxidase subunit 2 (255 aa).

The Mitochondrial intermembrane portion of the chain corresponds to 1-42 (MKFFFFSFINYKVLNDAARPWQIGFQDPATPIMEGIVNLHHD). The helical transmembrane segment at 43–63 (IIFFLIIIIIFVSWILFRTLF) threads the bilayer. Residues 64-83 (LFNSKTNPVAYNFSHGTFIE) lie on the Mitochondrial matrix side of the membrane. A helical membrane pass occupies residues 84–104 (LLWTLTPSLVLIGIAVPSFAL). Residues 105 to 255 (LYSIDEIIDP…IRWVQNKILD (151 aa)) lie on the Mitochondrial intermembrane side of the membrane. Positions 187, 222, 224, 226, 230, and 233 each coordinate Cu cation. Mg(2+) is bound at residue E224.

It belongs to the cytochrome c oxidase subunit 2 family. In terms of assembly, component of the cytochrome c oxidase (complex IV, CIV), a multisubunit enzyme composed of a catalytic core of 3 subunits and several supernumerary subunits. The complex exists as a monomer or a dimer and forms supercomplexes (SCs) in the inner mitochondrial membrane with ubiquinol-cytochrome c oxidoreductase (cytochrome b-c1 complex, complex III, CIII). Requires Cu cation as cofactor.

Its subcellular location is the mitochondrion inner membrane. It carries out the reaction 4 Fe(II)-[cytochrome c] + O2 + 8 H(+)(in) = 4 Fe(III)-[cytochrome c] + 2 H2O + 4 H(+)(out). Component of the cytochrome c oxidase, the last enzyme in the mitochondrial electron transport chain which drives oxidative phosphorylation. The respiratory chain contains 3 multisubunit complexes succinate dehydrogenase (complex II, CII), ubiquinol-cytochrome c oxidoreductase (cytochrome b-c1 complex, complex III, CIII) and cytochrome c oxidase (complex IV, CIV), that cooperate to transfer electrons derived from NADH and succinate to molecular oxygen, creating an electrochemical gradient over the inner membrane that drives transmembrane transport and the ATP synthase. Cytochrome c oxidase is the component of the respiratory chain that catalyzes the reduction of oxygen to water. Electrons originating from reduced cytochrome c in the intermembrane space (IMS) are transferred via the dinuclear copper A center (CU(A)) of subunit 2 and heme A of subunit 1 to the active site in subunit 1, a binuclear center (BNC) formed by heme A3 and copper B (CU(B)). The BNC reduces molecular oxygen to 2 water molecules using 4 electrons from cytochrome c in the IMS and 4 protons from the mitochondrial matrix. This Cyanidium caldarium (Red alga) protein is Cytochrome c oxidase subunit 2 (COX2).